We begin with the raw amino-acid sequence, 253 residues long: 5-oxoprolinase subunit A (253 aa).

This sequence belongs to the LamB/PxpA family. Forms a complex composed of PxpA, PxpB and PxpC.

It catalyses the reaction 5-oxo-L-proline + ATP + 2 H2O = L-glutamate + ADP + phosphate + H(+). In terms of biological role, catalyzes the cleavage of 5-oxoproline to form L-glutamate coupled to the hydrolysis of ATP to ADP and inorganic phosphate. In Bacillus cereus (strain ZK / E33L), this protein is 5-oxoprolinase subunit A.